Reading from the N-terminus, the 310-residue chain is 4-hydroxythreonine-4-phosphate dehydrogenase (310 aa).

Residues His126 and Thr127 each contribute to the substrate site. A divalent metal cation contacts are provided by His156, His195, and His251. The substrate site is built by Lys259, Asn268, and Arg277.

Belongs to the PdxA family. In terms of assembly, homodimer. Zn(2+) is required as a cofactor. The cofactor is Mg(2+). It depends on Co(2+) as a cofactor.

It is found in the cytoplasm. It catalyses the reaction 4-(phosphooxy)-L-threonine + NAD(+) = 3-amino-2-oxopropyl phosphate + CO2 + NADH. Its pathway is cofactor biosynthesis; pyridoxine 5'-phosphate biosynthesis; pyridoxine 5'-phosphate from D-erythrose 4-phosphate: step 4/5. Functionally, catalyzes the NAD(P)-dependent oxidation of 4-(phosphooxy)-L-threonine (HTP) into 2-amino-3-oxo-4-(phosphooxy)butyric acid which spontaneously decarboxylates to form 3-amino-2-oxopropyl phosphate (AHAP). The protein is 4-hydroxythreonine-4-phosphate dehydrogenase of Helicobacter acinonychis (strain Sheeba).